A 167-amino-acid polypeptide reads, in one-letter code: Peptidyl-prolyl cis-trans isomerase-like 3 (167 aa).

Residues 1-160 (MSVTLHTTLG…EEVRIERVTV (160 aa)) form the PPIase cyclophilin-type domain.

It belongs to the cyclophilin-type PPIase family. PPIL3 subfamily.

It catalyses the reaction [protein]-peptidylproline (omega=180) = [protein]-peptidylproline (omega=0). Functionally, PPIases accelerate the folding of proteins. It catalyzes the cis-trans isomerization of proline imidic peptide bonds in oligopeptides. The sequence is that of Peptidyl-prolyl cis-trans isomerase-like 3 (cyp-10) from Neurospora crassa (strain ATCC 24698 / 74-OR23-1A / CBS 708.71 / DSM 1257 / FGSC 987).